A 723-amino-acid chain; its full sequence is Protein Hook homolog (723 aa).

The 117-residue stretch at 4–120 folds into the Calponin-homology (CH) domain; sequence TELCECLVQW…RLLQLILGCA (117 aa). Coiled-coil stretches lie at residues 162-423 and 457-665; these read VLPE…MQLQ and EIKE…IVSA. Positions 682-723 are disordered; the sequence is LANGGPMQGGQSFLARQRQATSRRTTVSTTHPGHARSVNFVN. The span at 696 to 711 shows a compositional bias: low complexity; it reads ARQRQATSRRTTVSTT.

This sequence belongs to the hook family. As to quaternary structure, interacts with microtubules.

Its subcellular location is the cytoplasm. The protein localises to the cytoskeleton. May function to promote vesicle trafficking and/or fusion. May act to link a number of membrane-bound organelles to the cytoskeleton. The protein is Protein Hook homolog of Branchiostoma floridae (Florida lancelet).